The chain runs to 1703 residues: Ferlin 2 (1703 aa).

C2 domains are found at residues 18–141 (IRKL…KTWL) and 207–332 (KQPV…FRWF). Disordered stretches follow at residues 913–937 (NQFNDDDEGDNEDEQDSRENDFDDN), 970–1025 (NLDK…TSST), and 1194–1228 (KNKSNRSSMSLSMRSSIQSNTFKSSRKTSRSQKLG). The segment covering 916-928 (NDDDEGDNEDEQD) has biased composition (acidic residues). A compositionally biased stretch (polar residues) spans 979 to 991 (QPQSLKNLQNLDS). A compositionally biased stretch (basic and acidic residues) spans 993 to 1009 (SKADQKSQFDLKSESKS). Low complexity predominate over residues 1198 to 1209 (NRSSMSLSMRSS). Residues 1466-1595 (VARIIPPSTI…LKKLKEGIVF (130 aa)) form the C2 3 domain. Positions 1628–1651 (AAESDPVGEGQNEPNKDPILEKPK) are disordered. The segment covering 1641–1651 (PNKDPILEKPK) has biased composition (basic and acidic residues). Residues 1681–1701 (FAGIFVSIVTMMILFVKPGIL) form a helical membrane-spanning segment.

It belongs to the ferlin family.

It is found in the membrane. Its function is as follows. Regulates mucocyst exocytosis. The sequence is that of Ferlin 2 from Tetrahymena thermophila (strain SB210).